A 269-amino-acid chain; its full sequence is Small ribosomal subunit protein uS2 (269 aa).

The protein belongs to the universal ribosomal protein uS2 family.

The polypeptide is Small ribosomal subunit protein uS2 (rpsB) (Synechocystis sp. (strain ATCC 27184 / PCC 6803 / Kazusa)).